Reading from the N-terminus, the 333-residue chain is Protein FLAP1 homolog A (333 aa).

The chain crosses the membrane as a helical span at residues 26 to 46; sequence VVIIFVLAFTLVFTPTFEAEA. The tract at residues 53-74 is disordered; the sequence is IGGGSFRAPSAPSRSYSGPSGG. Over residues 58-70 the composition is skewed to low complexity; that stretch reads FRAPSAPSRSYSG. The next 2 membrane-spanning stretches (helical) occupy residues 92–112 and 261–281; these read IIPF…LVMI and GEYI…LPAV.

This sequence belongs to the FLAP family.

Its subcellular location is the cellular thylakoid membrane. The protein localises to the cell inner membrane. Essential for photosynthetic growth under fluctuating light by modulating PxcA- and PxcL-dependent intracellular pH regulation via proton transport (e.g. transient pH reduction upon transition from dark to light followed by an increase in the light until light-to-dark shift). The chain is Protein FLAP1 homolog A from Synechocystis sp. (strain ATCC 27184 / PCC 6803 / Kazusa).